A 2334-amino-acid polypeptide reads, in one-letter code: MKKGSERRLSKAKMPLSSHFPGPSSLRSSMRSRSLSPLIGSETQPLHPGGQWPAQAELTDESTVPLEPQQRKGAESYVGVRYITEALIKKLTKQDNLALVKSLNLSLSKDGGKKFRYIENLEKCVKLEVLNLSYNLIVKIEKVDKLLRLRELNLSYNKISKIEGLENMCNLQKLNLAGNEIEHIPVWFAKKLKSLRVLNLKGNKISSLQDVSKLKPLQDLTSLVLIDNPVVALPHYLQFIIFHLRSLESLEGQPVTTQDRQEAFERFSLEEIERLEKDLEKKTVETEELKNKQTKFLEEIKNQDKLNKSLKEEAMLQKQSCEELESDLSTKKELLKQKTVELTRACQKQYELEQELAFYKIDAKFEPLNYYPSEYAEIDKYPDESPYIGKSRYKRNMFATETYIVSDAQAVQIRKMVPEGGQLRHEHTPPRVQAPPDLQLEDTEKKISAAQTRLSELHHEIETAEQKVLRATQEFKQLEEAIQQKKISEAEKDLLLKQLSGRLQHLNRLRQEALDLEIQMEKQRKEIAEKHEEINTVQLATDSLDPKDPKHSHMKAQKRGKEQQLDIMNRQYTQLESRLDEILCRIAKETEEIKDLEQQLTDGQIAANEALKKDLEGVISGLQEYLGTIKGQATQAQNECRKLQDEKETLLQRLTEVQQEKEELELIAMDAENMRKELAELESALQEQHEVNASLQQAQGDLSAYETELETQLKLKDAETSQLKQELEKLLRRTQLEQSVLQTELEKERESLRDALGKAQSSEEKQQENNELRTQLKQLQDDNSLLKKQLKEFQNHLNHVVDGLIHPEEVAARVDELRKRLKLGAGEMRIHSPSDVLGKSLADLQKQFSEILARSQWEKEEAQVRERKLHEEMALQQEKLANGQEEFRQACERALEARIKFDKRQHNARIQQLENEIHYLQENLKSMEKIQGLTDLQLQEADEEKERILAQLQELEKKKKREDARSQEQFLGLDEELKSLKKAVAASDKLAAAELTIAKDQLKSLHGTVVRINQERAEELQEAERFSREAMQAAKDLSRAEAEIELLQHLLREREGQFRDEMENADLGAKGANSQLLEIEALNEAMAKQRAEITRLRDVLNLTGAGTKGGIENVLEEIAELRHAVSAQNEYISSMADPFRRQGWWYFMPPAPSSKVSSHSSQATKDSGLGLKYTASTPLRKPQPGQQEEKDSSGPLPASGYWVYSPIRSTLHKSFSKREDADSGGDSQEESGLDDQEEPPFVPPPGYIMYTVLPDGSPVPQGVALYAPSPPLPNSSHPLTPGTVVYGPPPAGAPIIYGPPPANFAVPLVPAGVQHCNIPEHHNLENEVSRLEDIMQHLKSKQREERRQKASTQHSEEEVDGLHRDIDDLLQEKKELELEVEELHRTIERHQQRKDFIDGHVENLMTELEIEKSLKHHEDIVDEIECLEKTLLKRRSELREADRLLAEAENELACTKEKTKSAVEKFTDAKRNLLQTESDAEALEKRAQETALNLVKAEQQLRLLQADAEDLEQHKIKQEEILKEINKVVAAKDADFQCLNEKKEKLTEELQSLQRDIKAAQHSEDHHLQVLRESETLLQAKRAELETLKSQVTSQQQELAVLDSELGHRREELLLLQDSLAQAKADLQEALTLGETEVAEKCSHIREVKSLLEELSFQKGELNVHISEKKTQLALIQQEMEKEEKNLQVVLQQLSRHKTELKNVADILQLETSELQGLKLQHDQKVVELEKAQVDVLEEKLELENLQQATQQQRRELERQRQLLERDRRETERVRAESQALQSCVECLSKEKEDLQGQCESWEKKSSHAQRVLAATEESNKMEQSNLGKLELSVRKLRQELEQLSQDKLALHSEVAEVQQQLQGKQEAINSLQEELDSTQDHLDLAKQDLIHTTKCQNELLNEQTQLQEDISKWMARLESCQKETETKEQQVQQLQDEIRESKLRLDQQEMMFQKLQKEREREEQKFEAGKVTLEQQQRQLEKELTDQKSRLKQLLTDVSAAEGRLGTLQEEERRIEGLERMLSQAKQQLSEREQQLMAKSGELLALQKEADDMRADFSLLRNQFLTERKKAEKQVAGLKEALKIQRSQLEKNLLEQKQENSCMQKEMATIELVAQDNHERARRLMKELSQMQQEYLELKKQVANQKDLERRQMEVSDAMRTLKSEVKDEIRTSLRNLNQFLPELPADLASILERNENLRELESLKENFPFTTKERIFEEKSNFPQVHIMDEHWRGEALRQRLRRHEDQLKAQLRHCMSKQAEVLIKGKQQTEGTLHSLRRQVDALGELVTSTSTDSASSPSLPSLVEDSQHGHSQSSFQVLQVPLEEPNSYRH.

The tract at residues 1 to 70 (MKKGSERRLS…ESTVPLEPQQ (70 aa)) is disordered. A compositionally biased stretch (low complexity) spans 21–38 (PGPSSLRSSMRSRSLSPL). 4 LRR repeats span residues 126 to 147 (KLEV…DKLL), 148 to 169 (RLRE…ENMC), 170 to 191 (NLQK…FAKK), and 194 to 215 (SLRV…SKLK). The LRRCT domain occupies 228 to 266 (NPVVALPHYLQFIIFHLRSLESLEGQPVTTQDRQEAFER). Coiled-coil stretches lie at residues 265-343 (ERFS…VELT) and 437-800 (DLQL…LNHV). 2 disordered regions span residues 542-562 (DSLD…RGKE) and 751-771 (SLRD…ENNE). Ser-832 is modified (phosphoserine). The stretch at 858 to 1102 (EKEEAQVRER…ITRLRDVLNL (245 aa)) forms a coiled coil. Disordered regions lie at residues 1154 to 1198 (SKVS…PLPA), 1213 to 1245 (KSFS…VPPP), and 1338 to 1360 (LKSK…EEVD). Over residues 1227 to 1238 (SQEESGLDDQEE) the composition is skewed to acidic residues. A coiled-coil region spans residues 1320 to 2169 (EHHNLENEVS…MRTLKSEVKD (850 aa)). Ser-1478 carries the phosphoserine modification. The segment at 1951–2121 (MMFQKLQKER…ELVAQDNHER (171 aa)) is required for centrosome localization. Positions 1988 to 2334 (QKSRLKQLLT…PLEEPNSYRH (347 aa)) are sufficient for interaction with HOOK2. Residues 2291–2307 (TSTSTDSASSPSLPSLV) are compositionally biased toward low complexity. The segment at 2291–2334 (TSTSTDSASSPSLPSLVEDSQHGHSQSSFQVLQVPLEEPNSYRH) is disordered.

Interacts with HOOK2. Interacts with EXOC6 and SNAPIN. Associates with the exocyst complex. As to expression, highly expressed in liver.

The protein resides in the cytoplasm. The protein localises to the cytoskeleton. Its subcellular location is the microtubule organizing center. It is found in the centrosome. It localises to the midbody. The protein resides in the midbody ring. Its function is as follows. Involved in cell cycle progression and cytokinesis. During the late steps of cytokinesis, anchors exocyst and SNARE complexes at the midbody, thereby allowing secretory vesicle-mediated abscission. This is Centriolin (Cntrl) from Mus musculus (Mouse).